The primary structure comprises 355 residues: Protein RecA (355 aa).

65–72 provides a ligand contact to ATP; it reads GPESSGKT.

It belongs to the RecA family.

It localises to the cytoplasm. Can catalyze the hydrolysis of ATP in the presence of single-stranded DNA, the ATP-dependent uptake of single-stranded DNA by duplex DNA, and the ATP-dependent hybridization of homologous single-stranded DNAs. It interacts with LexA causing its activation and leading to its autocatalytic cleavage. This chain is Protein RecA, found in Pseudomonas putida (Arthrobacter siderocapsulatus).